A 244-amino-acid polypeptide reads, in one-letter code: Tegument protein UL51 (244 aa).

A lipid anchor (S-palmitoyl cysteine; by host) is attached at Cys9. Positions 178–244 (GVTEAPSLGH…SRAAPCVLGQ (67 aa)) are disordered. The segment covering 221-244 (PRPTASPTAPRPGPSRAAPCVLGQ) has biased composition (low complexity).

Belongs to the herpesviridae UL51 family. As to quaternary structure, oligomerizes. Interacts with UL7; this interaction mediates UL7 incorporation to virions. Interacts with UL14. Phosphorylated. In terms of processing, palmitoylation is necessary for Golgi localization.

It is found in the virion tegument. The protein localises to the host cytoplasm. The protein resides in the host Golgi apparatus. Its function is as follows. Plays several roles during the time course of infection, including egress of virus particles from the perinuclear space and secondary envelopment of cytoplasmic capsids that bud into specific trans-Golgi network (TGN)-derived membranes. Plays also an essential role in the maintenance of host cytoplasmic viral assembly center (cVAC) morphology in primary host neuronal cells. The protein is Tegument protein UL51 of Homo sapiens (Human).